Here is a 109-residue protein sequence, read N- to C-terminus: AVINTFDGVADYLIRYKRLPDNYITKSQASALGWVASKGNLAEVAPGKSIGGDVFSNREGRLPSASGRTWREADINYVSGFRNADRLVYSSDWLIYKTTDHYATFARIR.

Glu72 functions as the Proton acceptor in the catalytic mechanism. The active-site Proton donor is His101.

This sequence belongs to the ribonuclease N1/T1 family.

It localises to the secreted. In terms of biological role, hydrolyzes phosphodiester bonds in RNA, poly- and oligoribonucleotides resulting in 3'-nucleoside monophosphates via 2',3'-cyclophosphate intermediates. The sequence is that of Ribonuclease from Heyndrickxia coagulans (Weizmannia coagulans).